Consider the following 328-residue polypeptide: MLEDYYPSTTSYYHGGIDDDLYTAKWGMVMTFLDLNDSSLTPFEGTHFALIGFKSDKGVYINNGRVGAVESPAAIRTQLAKFPWHLGNQVMVYDVGNIDGPNRSLEQLQNSLSKAIKRMCDLNLKPIVLGGGHETAYGHYLGLRQSLSPSDDLAVINMDAHFDLRPYDQTGPNSGTGFRQMFDDAVADKRLFKYFVLGIQEHNNNLFLFDFVAKSKGIQFLTGQDIYQMGHQKICRAIDRFLEGQERVYLTIDMDCFSVGAAPGVSAIQSLGVDPNLAVLVLQHIAASGKLVGFDVVEVSPPHDIDNHTANLAATFIFYLVQIMAQHS.

H133, D159, H161, D163, D253, and D255 together coordinate Mn(2+).

It belongs to the arginase family. Requires Mn(2+) as cofactor.

It catalyses the reaction N-formimidoyl-L-glutamate + H2O = formamide + L-glutamate. Its pathway is amino-acid degradation; L-histidine degradation into L-glutamate; L-glutamate from N-formimidoyl-L-glutamate (hydrolase route): step 1/1. Its function is as follows. Catalyzes the conversion of N-formimidoyl-L-glutamate to L-glutamate and formamide. In Streptococcus pyogenes serotype M6 (strain ATCC BAA-946 / MGAS10394), this protein is Formimidoylglutamase.